Here is a 348-residue protein sequence, read N- to C-terminus: S-adenosylmethionine:tRNA ribosyltransferase-isomerase (348 aa).

It belongs to the QueA family. As to quaternary structure, monomer.

It localises to the cytoplasm. The catalysed reaction is 7-aminomethyl-7-carbaguanosine(34) in tRNA + S-adenosyl-L-methionine = epoxyqueuosine(34) in tRNA + adenine + L-methionine + 2 H(+). It participates in tRNA modification; tRNA-queuosine biosynthesis. Transfers and isomerizes the ribose moiety from AdoMet to the 7-aminomethyl group of 7-deazaguanine (preQ1-tRNA) to give epoxyqueuosine (oQ-tRNA). The polypeptide is S-adenosylmethionine:tRNA ribosyltransferase-isomerase (Cytophaga hutchinsonii (strain ATCC 33406 / DSM 1761 / CIP 103989 / NBRC 15051 / NCIMB 9469 / D465)).